The primary structure comprises 160 residues: Transcriptional repressor NrdR (160 aa).

A compositionally biased stretch (polar residues) spans Met-1–Thr-11. The tract at residues Met-1 to Glu-20 is disordered. The segment at Cys-3–Cys-34 is a zinc-finger region. Residues Leu-49–Asp-139 form the ATP-cone domain.

It belongs to the NrdR family. It depends on Zn(2+) as a cofactor.

Negatively regulates transcription of bacterial ribonucleotide reductase nrd genes and operons by binding to NrdR-boxes. This chain is Transcriptional repressor NrdR, found in Nitrobacter winogradskyi (strain ATCC 25391 / DSM 10237 / CIP 104748 / NCIMB 11846 / Nb-255).